A 230-amino-acid chain; its full sequence is PKHD-type hydroxylase PD_1553 (230 aa).

Positions Arg78–Ser182 constitute a Fe2OG dioxygenase domain. The Fe cation site is built by His96, Asp98, and His163. A 2-oxoglutarate-binding site is contributed by Arg173.

It depends on Fe(2+) as a cofactor. L-ascorbate is required as a cofactor.

The protein is PKHD-type hydroxylase PD_1553 of Xylella fastidiosa (strain Temecula1 / ATCC 700964).